The sequence spans 479 residues: Ribosomal RNA small subunit methyltransferase F (479 aa).

S-adenosyl-L-methionine is bound by residues 125 to 131, glutamate 149, glycine 177, and aspartate 194; that span reads AAAPGSK. Catalysis depends on cysteine 247, which acts as the Nucleophile.

Belongs to the class I-like SAM-binding methyltransferase superfamily. RsmB/NOP family.

It localises to the cytoplasm. It carries out the reaction cytidine(1407) in 16S rRNA + S-adenosyl-L-methionine = 5-methylcytidine(1407) in 16S rRNA + S-adenosyl-L-homocysteine + H(+). Its function is as follows. Specifically methylates the cytosine at position 1407 (m5C1407) of 16S rRNA. This chain is Ribosomal RNA small subunit methyltransferase F, found in Shigella flexneri serotype 5b (strain 8401).